Here is a 964-residue protein sequence, read N- to C-terminus: E3 ubiquitin-protein ligase TRIM37 (964 aa).

Met1 carries the N-acetylmethionine modification. Residues 15 to 55 form an RING-type; degenerate zinc finger; the sequence is CFICMEKLRDARLCPHCSKLCCFSCIRRWLTEQRAQCPHCR. Residues 90–132 form a B box-type zinc finger; the sequence is NEKDKCENHHEKLSVFCWTCKKCICHQCALWGGMHGGHTFKPL. Zn(2+)-binding residues include Cys95, His98, Cys117, and His124. Residues 132-234 are a coiled coil; the sequence is LAEIYEQHVT…VEHQLRSCSK (103 aa). The MATH domain maps to 276 to 403; that stretch reads YDSATFVLEN…NDTVILRFQV (128 aa). Residues 419–450 adopt a coiled-coil conformation; sequence ITQLEAAQTSYIQQINNLKERLTIELSRTQKS. Ser454 carries the phosphoserine modification. 3 disordered regions span residues 477–513, 530–554, and 640–663; these read CSDMLLEGGPTTASVREAKEDEEDEEKIQNEDYHHEL, QLDGSSSSASSTATSNTEENDIDEE, and RPPASLLQPTASYSRKDKDQRKQQ. Residues 503 to 513 are compositionally biased toward basic and acidic residues; it reads KIQNEDYHHEL. The span at 534–544 shows a compositional bias: low complexity; the sequence is SSSSASSTATS. A coiled-coil region spans residues 673–700; that stretch reads KMLKRLKTQMAEVRCMKTDVKNTLSEIK. Positions 752–761 are enriched in polar residues; that stretch reads NSTNKKSNSP. Disordered regions lie at residues 752-812 and 891-964; these read NSTN…SPRA and GASA…NSGR. The segment covering 776-788 has biased composition (basic and acidic residues); sequence RAVDPGENSRSKG. The span at 794 to 807 shows a compositional bias: low complexity; that stretch reads SEGSPGSSQSGSRH. The segment covering 904-916 has biased composition (acidic residues); that stretch reads SDIECDTENEEQE. Residues 955–964 show a composition bias toward polar residues; that stretch reads SFNTDENSGR.

This sequence belongs to the TRIM/RBCC family. In terms of assembly, associates with the PRC2/EED-EZH2 complex. Auto-ubiquitinated. As to expression, ubiquitous. Highly expressed in testis, while it is weakly expressed in other tissues.

Its subcellular location is the chromosome. It is found in the cytoplasm. It localises to the perinuclear region. The protein resides in the peroxisome membrane. It carries out the reaction S-ubiquitinyl-[E2 ubiquitin-conjugating enzyme]-L-cysteine + [acceptor protein]-L-lysine = [E2 ubiquitin-conjugating enzyme]-L-cysteine + N(6)-ubiquitinyl-[acceptor protein]-L-lysine.. It functions in the pathway protein modification; protein ubiquitination. Its function is as follows. E3 ubiquitin-protein ligase required to prevent centriole reduplication. Probably acts by ubiquitinating positive regulators of centriole reduplication. Mediates monoubiquitination of 'Lys-119' of histone H2A (H2AK119Ub), a specific tag for epigenetic transcriptional repression: associates with some Polycomb group (PcG) multiprotein PRC2-like complex and mediates repression of target genes. Also acts as a positive regulator of peroxisome import by mediating monoubiquitination of PEX5 at 'Lys-472': monoubiquitination promotes PEX5 stabilitation by preventing its polyubiquitination and degradation by the proteasome. Has anti-HIV activity. The chain is E3 ubiquitin-protein ligase TRIM37 from Homo sapiens (Human).